A 334-amino-acid polypeptide reads, in one-letter code: Fructose-1,6-bisphosphatase class 1 (334 aa).

The Mg(2+) site is built by Glu-92, Asp-114, Leu-116, and Asp-117. Substrate-binding positions include 117-120 (DGSS) and Asn-209. Glu-281 is a Mg(2+) binding site.

This sequence belongs to the FBPase class 1 family. Homotetramer. Mg(2+) serves as cofactor.

The protein resides in the cytoplasm. The enzyme catalyses beta-D-fructose 1,6-bisphosphate + H2O = beta-D-fructose 6-phosphate + phosphate. It functions in the pathway carbohydrate biosynthesis; gluconeogenesis. In Nitrosomonas europaea (strain ATCC 19718 / CIP 103999 / KCTC 2705 / NBRC 14298), this protein is Fructose-1,6-bisphosphatase class 1.